Reading from the N-terminus, the 289-residue chain is ATP synthase gamma chain (289 aa).

The protein belongs to the ATPase gamma chain family. As to quaternary structure, F-type ATPases have 2 components, CF(1) - the catalytic core - and CF(0) - the membrane proton channel. CF(1) has five subunits: alpha(3), beta(3), gamma(1), delta(1), epsilon(1). CF(0) has three main subunits: a, b and c.

The protein resides in the cell inner membrane. In terms of biological role, produces ATP from ADP in the presence of a proton gradient across the membrane. The gamma chain is believed to be important in regulating ATPase activity and the flow of protons through the CF(0) complex. This Erwinia tasmaniensis (strain DSM 17950 / CFBP 7177 / CIP 109463 / NCPPB 4357 / Et1/99) protein is ATP synthase gamma chain.